Consider the following 121-residue polypeptide: Ribonuclease P protein component (121 aa).

This sequence belongs to the RnpA family. Consists of a catalytic RNA component (M1 or rnpB) and a protein subunit.

The enzyme catalyses Endonucleolytic cleavage of RNA, removing 5'-extranucleotides from tRNA precursor.. Its function is as follows. RNaseP catalyzes the removal of the 5'-leader sequence from pre-tRNA to produce the mature 5'-terminus. It can also cleave other RNA substrates such as 4.5S RNA. The protein component plays an auxiliary but essential role in vivo by binding to the 5'-leader sequence and broadening the substrate specificity of the ribozyme. The sequence is that of Ribonuclease P protein component from Coxiella burnetii (strain Dugway 5J108-111).